A 390-amino-acid polypeptide reads, in one-letter code: GDSL esterase/lipase At1g28640 (390 aa).

Residues 1–26 (MASSLEKLISSFLLVLYSTTIIVASS) form the signal peptide. Catalysis depends on Ser42, which acts as the Nucleophile. Asn105, Asn138, and Asn321 each carry an N-linked (GlcNAc...) asparagine glycan. Residues Asp346 and His349 contribute to the active site. A glycan (N-linked (GlcNAc...) asparagine) is linked at Asn364.

This sequence belongs to the 'GDSL' lipolytic enzyme family.

It localises to the secreted. The polypeptide is GDSL esterase/lipase At1g28640 (Arabidopsis thaliana (Mouse-ear cress)).